A 157-amino-acid polypeptide reads, in one-letter code: Small ribosomal subunit protein uS7cz/uS7cy (157 aa).

Belongs to the universal ribosomal protein uS7 family. As to quaternary structure, part of the 30S ribosomal subunit.

Its subcellular location is the plastid. It is found in the chloroplast. Functionally, one of the primary rRNA binding proteins, it binds directly to 16S rRNA where it nucleates assembly of the head domain of the 30S subunit. The protein is Small ribosomal subunit protein uS7cz/uS7cy (rps7-A) of Gnetum parvifolium (Small-leaved jointfir).